A 163-amino-acid polypeptide reads, in one-letter code: Retinoic acid receptor responder protein 2 (163 aa).

A signal peptide spans 1–20; it reads MRRLLIPLALWLGAVGVGVA. Cystine bridges form between C77–C87, C98–C117, and C101–C135. Residues 158-163 constitute a propeptide that is removed on maturation; it reads KALPRS.

In terms of processing, secreted in an inactive precursor form, prochemerin, which is proteolytically processed by a variety of extracellular proteases to generate forms with differing levels of bioactivity. For example, the removal of six amino acids results in chemerin-157, which exhibits the highest activity, while removal of seven amino acids results in chemerin-156 which has slightly less activity. Some proteases are able to cleave at more than one site and chemerin forms may be sequentially processed by different enzymes to modulate activity levels. The coordinated expression and activity of chemerin-modifying enzymes is essential for regulating its bioactivation, inactivation and, consequently, biological function. Cathepsin G cleaves seven C-terminal amino acids from prochemerin (chemerin-156), elastase is able to cleave six (chemerin-157), eight (chemerin-155) or eleven (chemerin-152), plasmin cleaves five amino acids (chemerin-158), and tryptase cleaves five (chemerin-158) or eight (chemerin-155). Multiple cleavages might be required to fully activate chemerin, with an initial tryptase cleavage resulting in chemerin with low activity (chemerin-158), and a second cleavage by carboxypeptidase N or B producing highly active chemerin (chemerin-157). As to expression, expressed at the highest levels in placenta, liver, and white adipose tissue (WAT), and to a lesser extent in many other tissues such as lung, brown adipose tissue, heart, ovary, kidney, skeletal muscle and pancreas. Within WAT, expression is enriched in adipocytes as compared to the stromal vascular fraction. Expression and secretion increases dramatically with adipogenesis. Highly expressed in skin (basal and suprabasal layers of the epidermis, hair follicles and endothelial cells). Expression is elevated in numerous metabolic and inflammatory diseases including psoriasis, obesity, type 2 diabetes, metabolic syndrome and cardiovascular disease.

It is found in the secreted. In terms of biological role, adipocyte-secreted protein (adipokine) that regulates adipogenesis, metabolism and inflammation through activation of the chemokine-like receptor 1 (CMKLR1). Also acts as a ligand for CMKLR2. Can also bind to C-C chemokine receptor-like 2 (CCRL2), but with a lower affinity than it does to CMKLR1 or CMKLR2. Positively regulates adipocyte differentiation, modulates the expression of adipocyte genes involved in lipid and glucose metabolism and might play a role in angiogenesis, a process essential for the expansion of white adipose tissue. Also acts as a pro-inflammatory adipokine, causing an increase in secretion of pro-inflammatory and prodiabetic adipokines, which further impair adipose tissue metabolic function and have negative systemic effects including impaired insulin sensitivity, altered glucose and lipid metabolism, and a decrease in vascular function in other tissues. Can have both pro- and anti-inflammatory properties depending on the modality of enzymatic cleavage by different classes of proteases. Acts as a chemotactic factor for leukocyte populations expressing CMKLR1, particularly immature plasmacytoid dendritic cells, but also immature myeloid DCs, macrophages and natural killer cells. Exerts an anti-inflammatory role by preventing TNF/TNFA-induced VCAM1 expression and monocytes adhesion in vascular endothelial cells. The effect is mediated via inhibiting activation of NF-kappa-B and CRK/p38 through stimulation of AKT1/NOS3 signaling and nitric oxide production. Its dual role in inflammation and metabolism might provide a link between chronic inflammation and obesity, as well as obesity-related disorders such as type 2 diabetes and cardiovascular disease. Exhibits an antimicrobial function in the skin. The sequence is that of Retinoic acid receptor responder protein 2 (RARRES2) from Homo sapiens (Human).